We begin with the raw amino-acid sequence, 115 residues long: Salivary anti-complement protein (115 aa).

The N-terminal stretch at methionine 1–cysteine 22 is a signal peptide. Intrachain disulfides connect cysteine 26/cysteine 108, cysteine 41/cysteine 92, and cysteine 83/cysteine 101.

In terms of assembly, may form multimers. Salivary gland (at protein level).

It is found in the secreted. Its function is as follows. Salivary protein that inhibits the classical pathway of complement system activation in the host while having no inhibitory effect on the alternative or lectin pathways. Prevent cleavage of host C4 and consequently impairs the activation of factors downstream of C4b in the complement cascade. The protein is Salivary anti-complement protein of Lutzomyia longipalpis (Sand fly).